We begin with the raw amino-acid sequence, 269 residues long: Ribonuclease HII (269 aa).

One can recognise an RNase H type-2 domain in the interval 83–269 (YLIAGVDEVG…HRMSFLTNIL (187 aa)). A divalent metal cation is bound by residues Asp-89, Glu-90, and Asp-185.

This sequence belongs to the RNase HII family. Requires Mn(2+) as cofactor. It depends on Mg(2+) as a cofactor.

It localises to the cytoplasm. It carries out the reaction Endonucleolytic cleavage to 5'-phosphomonoester.. Its function is as follows. Endonuclease that specifically degrades the RNA of RNA-DNA hybrids. The sequence is that of Ribonuclease HII from Clostridium botulinum (strain Loch Maree / Type A3).